The sequence spans 624 residues: Heat shock factor protein 5 (624 aa).

The DNA-binding element occupies 11-228 (NPNNFPAKLW…FHRSFRRDNL (218 aa)). 5 disordered regions span residues 52 to 77 (LSPP…SGVG), 112 to 138 (GAAG…HSPH), 186 to 214 (SASA…HGPV), 429 to 461 (CPSS…LEPL), and 572 to 605 (GPAN…DLHL). Gly residues-rich tracts occupy residues 58–77 (GAGG…SGVG) and 112–127 (GAAG…GPAG). 2 stretches are compositionally biased toward low complexity: residues 186-197 (SASASTSPLQHQ) and 442-457 (PNAN…QASQ). Residue S600 is modified to Phosphoserine.

Belongs to the HSF family. As to quaternary structure, homooligomer. Highly expressed in testis particularly in spermatocytes (at protein level). Not expressed in fetal testis and ovary.

It is found in the nucleus. Its subcellular location is the chromosome. In terms of biological role, DNA-binding transcription factor that is essential for male fertility, spermatogenesis and meiotic prophase progression in spermatocytes under non-stress conditions. Positvely and negatively regulates gene expression to ensure progression of meiotic prophase beyond pachytene stage in spermatocytes. Plays a role in male germline meiotic sex chromosome remodeling and silencing through regulation of SMARCA4. In Mus musculus (Mouse), this protein is Heat shock factor protein 5 (Hsf5).